We begin with the raw amino-acid sequence, 3779 residues long: Protein DDB_G0268328 (3779 aa).

12 disordered regions span residues 24-56 (RQIK…KDGS), 1001-1028 (HEDE…DDDD), 1137-1165 (QDST…QQQQ), 1513-1538 (PTNS…SLLS), 1656-1690 (ETTV…NNKE), 2027-2054 (SNSS…DSNN), 2144-2184 (NNNN…NNSS), 2280-2325 (ISTT…NEQQ), 2508-2527 (QINN…REEG), 2720-2748 (DGNN…NDSS), 2975-3030 (ESND…DSIK), and 3427-3450 (QSNT…SGKL). 4 stretches are compositionally biased toward low complexity: residues 26–56 (IKSQ…KDGS), 1011–1020 (DNSNNSNSQD), 1149–1165 (YYHQ…QQQQ), and 1515–1538 (NSIY…SLLS). Residues 1656-1671 (ETTVLEKETKETKDNN) show a composition bias toward basic and acidic residues. Over residues 1672–1687 (LENNNNNTNNSNNNNN) the composition is skewed to low complexity. Low complexity-rich tracts occupy residues 2144–2182 (NNNN…NNNN) and 2285–2322 (NNNN…NNNN). Low complexity-rich tracts occupy residues 2722–2745 (NNNN…QNNN) and 3015–3030 (SVNN…DSIK). Residues 3433–3446 (GTGGGGGNGGGNNG) show a composition bias toward gly residues.

The protein is Protein DDB_G0268328 of Dictyostelium discoideum (Social amoeba).